We begin with the raw amino-acid sequence, 235 residues long: Phosphoribosylaminoimidazole-succinocarboxamide synthase (235 aa).

Belongs to the SAICAR synthetase family.

It catalyses the reaction 5-amino-1-(5-phospho-D-ribosyl)imidazole-4-carboxylate + L-aspartate + ATP = (2S)-2-[5-amino-1-(5-phospho-beta-D-ribosyl)imidazole-4-carboxamido]succinate + ADP + phosphate + 2 H(+). The protein operates within purine metabolism; IMP biosynthesis via de novo pathway; 5-amino-1-(5-phospho-D-ribosyl)imidazole-4-carboxamide from 5-amino-1-(5-phospho-D-ribosyl)imidazole-4-carboxylate: step 1/2. This Caldanaerobacter subterraneus subsp. tengcongensis (strain DSM 15242 / JCM 11007 / NBRC 100824 / MB4) (Thermoanaerobacter tengcongensis) protein is Phosphoribosylaminoimidazole-succinocarboxamide synthase.